The chain runs to 226 residues: Endonuclease NucS (226 aa).

This sequence belongs to the NucS endonuclease family.

The protein localises to the cytoplasm. Functionally, cleaves both 3' and 5' ssDNA extremities of branched DNA structures. This chain is Endonuclease NucS, found in Mycobacterium tuberculosis (strain CDC 1551 / Oshkosh).